Here is a 219-residue protein sequence, read N- to C-terminus: Counting factor-associated protein C (219 aa).

Positions 1–16 (MKVLILLVSLISVCFS) are cleaved as a signal peptide. Asn74 and Asn123 each carry an N-linked (GlcNAc...) asparagine glycan.

The protein resides in the secreted. This chain is Counting factor-associated protein C (cfaC), found in Dictyostelium discoideum (Social amoeba).